The chain runs to 240 residues: Uridylate kinase (240 aa).

Residue 14 to 17 (KLSG) coordinates ATP. Gly56 provides a ligand contact to UMP. ATP is bound by residues Gly57 and Arg61. UMP-binding positions include Asp76 and 137 to 144 (TGNPFFTT). ATP is bound by residues Thr164, Tyr170, and Asp173.

Belongs to the UMP kinase family. Homohexamer.

The protein resides in the cytoplasm. It catalyses the reaction UMP + ATP = UDP + ADP. It functions in the pathway pyrimidine metabolism; CTP biosynthesis via de novo pathway; UDP from UMP (UMPK route): step 1/1. With respect to regulation, inhibited by UTP. Its function is as follows. Catalyzes the reversible phosphorylation of UMP to UDP. The polypeptide is Uridylate kinase (Paracidovorax citrulli (strain AAC00-1) (Acidovorax citrulli)).